We begin with the raw amino-acid sequence, 516 residues long: GMP synthase [glutamine-hydrolyzing] (516 aa).

The Glutamine amidotransferase type-1 domain maps to 8 to 198 (KILILDFGSQ…VVNICGCDTL (191 aa)). The active-site Nucleophile is cysteine 84. Catalysis depends on residues histidine 172 and glutamate 174. Residues 199 to 391 (WNIENIIEND…LGLPYNMLYR (193 aa)) enclose the GMPS ATP-PPase domain. ATP is bound at residue 226 to 232 (SGGVDSS).

As to quaternary structure, homodimer.

The enzyme catalyses XMP + L-glutamine + ATP + H2O = GMP + L-glutamate + AMP + diphosphate + 2 H(+). It functions in the pathway purine metabolism; GMP biosynthesis; GMP from XMP (L-Gln route): step 1/1. Its function is as follows. Catalyzes the synthesis of GMP from XMP. This Francisella tularensis subsp. mediasiatica (strain FSC147) protein is GMP synthase [glutamine-hydrolyzing].